The primary structure comprises 88 residues: Small ribosomal subunit protein bS18 (88 aa).

The segment at 1 to 22 is disordered; sequence MSTKNAKPKKEAQRRPSRKAKV.

It belongs to the bacterial ribosomal protein bS18 family. As to quaternary structure, part of the 30S ribosomal subunit. Forms a tight heterodimer with protein bS6.

Functionally, binds as a heterodimer with protein bS6 to the central domain of the 16S rRNA, where it helps stabilize the platform of the 30S subunit. This is Small ribosomal subunit protein bS18 (rpsR) from Thermus thermophilus.